A 410-amino-acid polypeptide reads, in one-letter code: Peptidase T (410 aa).

His-79 is a binding site for Zn(2+). The active site involves Asp-81. Asp-142 provides a ligand contact to Zn(2+). Glu-176 (proton acceptor) is an active-site residue. Glu-177, Asp-199, and His-381 together coordinate Zn(2+).

Belongs to the peptidase M20B family. Requires Zn(2+) as cofactor.

Its subcellular location is the cytoplasm. It catalyses the reaction Release of the N-terminal residue from a tripeptide.. Its function is as follows. Cleaves the N-terminal amino acid of tripeptides. The polypeptide is Peptidase T (Bacillus cereus (strain G9842)).